The sequence spans 93 residues: Pyrimidine/purine nucleoside phosphorylase (93 aa).

This sequence belongs to the nucleoside phosphorylase PpnP family.

It carries out the reaction a purine D-ribonucleoside + phosphate = a purine nucleobase + alpha-D-ribose 1-phosphate. The catalysed reaction is adenosine + phosphate = alpha-D-ribose 1-phosphate + adenine. The enzyme catalyses cytidine + phosphate = cytosine + alpha-D-ribose 1-phosphate. It catalyses the reaction guanosine + phosphate = alpha-D-ribose 1-phosphate + guanine. It carries out the reaction inosine + phosphate = alpha-D-ribose 1-phosphate + hypoxanthine. The catalysed reaction is thymidine + phosphate = 2-deoxy-alpha-D-ribose 1-phosphate + thymine. The enzyme catalyses uridine + phosphate = alpha-D-ribose 1-phosphate + uracil. It catalyses the reaction xanthosine + phosphate = alpha-D-ribose 1-phosphate + xanthine. In terms of biological role, catalyzes the phosphorolysis of diverse nucleosides, yielding D-ribose 1-phosphate and the respective free bases. Can use uridine, adenosine, guanosine, cytidine, thymidine, inosine and xanthosine as substrates. Also catalyzes the reverse reactions. The chain is Pyrimidine/purine nucleoside phosphorylase from Pseudomonas syringae pv. tomato (strain ATCC BAA-871 / DC3000).